The primary structure comprises 95 residues: Osteocalcin-2 (95 aa).

Positions 1-23 are cleaved as a signal peptide; sequence MRTLSLLTLLALAALCLSDLTDA. Residues 24–49 constitute a propeptide that is removed on maturation; that stretch reads KPSGPESDKAFMSKQEGNKVVNRLRR. Residues 46–92 enclose the Gla domain; the sequence is RLRRYLGASVPSPDPLEPTREQCELNPACDELSDQYGLKTAYKRIYG. Ca(2+) contacts are provided by glutamate 62, glutamate 66, glutamate 69, and aspartate 75. A disulfide bond links cysteine 68 and cysteine 74.

Belongs to the osteocalcin/matrix Gla protein family. Post-translationally, gamma-carboxyglutamate residues are formed by vitamin K dependent carboxylation by GGCX. These residues are essential for the binding of calcium. Carboxylated in a Ptprv/Esp-dependent process. Decarboxylation promotes the hormone activity. In terms of tissue distribution, bone.

The protein localises to the secreted. Its function is as follows. The carboxylated form is one of the main organic components of the bone matrix, which constitutes 1-2% of the total bone protein: it acts as a negative regulator of bone formation and is required to limit bone formation without impairing bone resorption or mineralization. The carboxylated form binds strongly to apatite and calcium. Functionally, the uncarboxylated form acts as a hormone secreted by osteoblasts, which regulates different cellular processes, such as energy metabolism, male fertility and brain development. Regulates of energy metabolism by acting as a hormone favoring pancreatic beta-cell proliferation, insulin secretion and sensitivity and energy expenditure. Uncarboxylated osteocalcin hormone also promotes testosterone production in the testes: acts as a ligand for G protein-coupled receptor GPRC6A at the surface of Leydig cells, initiating a signaling response that promotes the expression of enzymes required for testosterone synthesis in a CREB-dependent manner. Also acts as a regulator of brain development: osteocalcin hormone crosses the blood-brain barrier and acts as a ligand for GPR158 on neurons, initiating a signaling response that prevents neuronal apoptosis in the hippocampus, favors the synthesis of all monoamine neurotransmitters and inhibits that of gamma-aminobutyric acid (GABA). Osteocalcin also crosses the placenta during pregnancy and maternal osteocalcin is required for fetal brain development. This is Osteocalcin-2 (Bglap2) from Mus musculus (Mouse).